The following is a 287-amino-acid chain: Ethylene-responsive transcription factor ERF116 (287 aa).

The AP2/ERF DNA-binding region spans 80 to 140 (YPVGVRPRPS…ASSGSAVSSS (61 aa)).

The protein belongs to the AP2/ERF transcription factor family. ERF subfamily.

Its subcellular location is the nucleus. Probably acts as a transcriptional activator. Binds to the GCC-box pathogenesis-related promoter element. May be involved in the regulation of gene expression by stress factors and by components of stress signal transduction pathways. In Arabidopsis thaliana (Mouse-ear cress), this protein is Ethylene-responsive transcription factor ERF116 (ERF116).